The chain runs to 169 residues: MKNKQTEDFPESFYVMIEIPMGSNCKYEYKEELDNIVLDRVLFTAMTYPANYGFALDTRGKDGDPLDVLVFSSVSINPGIIVRCRAIGVAEMNDEEGEDNKILAVPVDKVDPASSIVRNESDIPEYQKDKLKHFFEHYKELEKGKFMKFHGFKGRDEAVKQLAEARLKQ.

Residues lysine 26, arginine 40, and tyrosine 52 each contribute to the substrate site. Mg(2+) contacts are provided by aspartate 62, aspartate 67, and aspartate 99. Residue tyrosine 138 participates in substrate binding.

Belongs to the PPase family. In terms of assembly, homohexamer. The cofactor is Mg(2+).

It localises to the cytoplasm. The enzyme catalyses diphosphate + H2O = 2 phosphate + H(+). Functionally, catalyzes the hydrolysis of inorganic pyrophosphate (PPi) forming two phosphate ions. This Thermoplasma volcanium (strain ATCC 51530 / DSM 4299 / JCM 9571 / NBRC 15438 / GSS1) protein is Inorganic pyrophosphatase.